We begin with the raw amino-acid sequence, 467 residues long: MADDTTDTKSSNQMWGGRFASGPDAIMEEINASIGFDKKLFAQDIRGSIAHATMLAHQEIISAEDKDKIVHGLNTILSEIESGNFEFSRQLEDIHMNVEARLATLIGPAAGRLHTARSRNDQVALDFRLWVKEELQKTEQMLTGLIAAFLDRAEEHAESVMPGFTHLQTAQPVTFGHHCMAYVEMFGRDRSRVRHAIEHLDESPIGAAALAGTGYPIDRHMTAKALGFREPTRNSIDTVSDRDFAIEFLSIAAIAGMHLSRLAEEIVIWSTPQFGFVRLSDAFSTGSSIMPQKKNPDAAELVRAKTGRINGSLVALLTIMKGLPLAYSKDMQEDKEQVFDAAESLELAIAAMTGMVRDMTVNTARMKAAAGSGYSTATDLADWLVREAGLPFRDAHHVTGRAVALAESKGCDLAELPLSDLQAIHADITDKVYDVLTVEASVASRKSFGGTAPSEVRRQIAFWRARN.

It belongs to the lyase 1 family. Argininosuccinate lyase subfamily.

The protein localises to the cytoplasm. It carries out the reaction 2-(N(omega)-L-arginino)succinate = fumarate + L-arginine. It functions in the pathway amino-acid biosynthesis; L-arginine biosynthesis; L-arginine from L-ornithine and carbamoyl phosphate: step 3/3. The sequence is that of Argininosuccinate lyase from Rhizobium johnstonii (strain DSM 114642 / LMG 32736 / 3841) (Rhizobium leguminosarum bv. viciae).